The following is a 517-amino-acid chain: Xylosidase/arabinosidase (517 aa).

Residue aspartate 15 is the Proton acceptor of the active site. The active-site Proton donor is the glutamate 185.

This sequence belongs to the glycosyl hydrolase 43 family.

The catalysed reaction is Hydrolysis of (1-&gt;4)-beta-D-xylans, to remove successive D-xylose residues from the non-reducing termini.. The enzyme catalyses Hydrolysis of terminal non-reducing alpha-L-arabinofuranoside residues in alpha-L-arabinosides.. Its function is as follows. Has a 1.6-fold higher activity as an arabinosidase than as a beta-xylosidase when tested on the substrates nitrophenyl-beta-D-xylopyranoside and P-nitrophenyl-alpha-L-arabinofuranoside. This Butyrivibrio fibrisolvens protein is Xylosidase/arabinosidase (xylB).